The sequence spans 278 residues: 3-methyl-2-oxobutanoate hydroxymethyltransferase (278 aa).

2 residues coordinate Mg(2+): aspartate 43 and aspartate 82. 3-methyl-2-oxobutanoate-binding positions include 43–44 (DS), aspartate 82, and lysine 112. Glutamate 114 is a Mg(2+) binding site. The active-site Proton acceptor is the glutamate 181.

It belongs to the PanB family. As to quaternary structure, homodecamer; pentamer of dimers. Requires Mg(2+) as cofactor.

Its subcellular location is the cytoplasm. It catalyses the reaction 3-methyl-2-oxobutanoate + (6R)-5,10-methylene-5,6,7,8-tetrahydrofolate + H2O = 2-dehydropantoate + (6S)-5,6,7,8-tetrahydrofolate. It participates in cofactor biosynthesis; (R)-pantothenate biosynthesis; (R)-pantoate from 3-methyl-2-oxobutanoate: step 1/2. Catalyzes the reversible reaction in which hydroxymethyl group from 5,10-methylenetetrahydrofolate is transferred onto alpha-ketoisovalerate to form ketopantoate. The protein is 3-methyl-2-oxobutanoate hydroxymethyltransferase of Bacillus cereus (strain G9842).